A 124-amino-acid polypeptide reads, in one-letter code: Small ribosomal subunit protein uS12 (124 aa).

Position 89 is a 3-methylthioaspartic acid (aspartate 89). Residues 105–124 (AGVKDRKKGRSKYGAKRPKA) are disordered. Basic residues predominate over residues 109-124 (DRKKGRSKYGAKRPKA).

It belongs to the universal ribosomal protein uS12 family. Part of the 30S ribosomal subunit. Contacts proteins S8 and S17. May interact with IF1 in the 30S initiation complex.

Its function is as follows. With S4 and S5 plays an important role in translational accuracy. In terms of biological role, interacts with and stabilizes bases of the 16S rRNA that are involved in tRNA selection in the A site and with the mRNA backbone. Located at the interface of the 30S and 50S subunits, it traverses the body of the 30S subunit contacting proteins on the other side and probably holding the rRNA structure together. The combined cluster of proteins S8, S12 and S17 appears to hold together the shoulder and platform of the 30S subunit. This chain is Small ribosomal subunit protein uS12, found in Dichelobacter nodosus (strain VCS1703A).